A 260-amino-acid polypeptide reads, in one-letter code: CD40 ligand (260 aa).

The Cytoplasmic segment spans residues 1-22; the sequence is MIETYSQPSPRSVATGLPASMK. Residues 23–46 traverse the membrane as a helical; Signal-anchor for type II membrane protein segment; the sequence is IFMYLLTVFLITQMIGSVLFAVYL. Over 47-260 the chain is Extracellular; it reads HRRLDKVEEE…GFSSFGLLKL (214 aa). Residues 121 to 260 enclose the THD domain; the sequence is IAAHVVSEAN…GFSSFGLLKL (140 aa). A disulfide bond links C177 and C217. N239 is a glycosylation site (N-linked (GlcNAc...) asparagine).

Belongs to the tumor necrosis factor family. Homotrimer. Interacts with CD28. CD40 ligand, soluble form: Exists as either a monomer or a homotrimer. Forms a ternary complex between CD40 and integrins for CD40-CD40LG signaling. Post-translationally, the soluble form derives from the membrane form by proteolytic processing. Specifically expressed on activated CD4+ T-lymphocytes.

It is found in the cell membrane. The protein localises to the cell surface. Its subcellular location is the secreted. In terms of biological role, cytokine that acts as a ligand to CD40/TNFRSF5. Costimulates T-cell proliferation and cytokine production. Its cross-linking on T-cells generates a costimulatory signal which enhances the production of IL4 and IL10 in conjunction with the TCR/CD3 ligation and CD28 costimulation. Induces the activation of NF-kappa-B. Induces the activation of kinases MAPK8 and PAK2 in T-cells. Mediates B-cell proliferation in the absence of co-stimulus as well as IgE production in the presence of IL4. Involved in immunoglobulin class switching. Its function is as follows. Acts as a ligand for integrins, specifically ITGA5:ITGB1 and ITGAV:ITGB3; both integrins and the CD40 receptor are required for activation of CD40-CD40LG signaling, which have cell-type dependent effects, such as B-cell activation, NF-kappa-B signaling and anti-apoptotic signaling. This chain is CD40 ligand (Cd40lg), found in Mus musculus (Mouse).